A 583-amino-acid polypeptide reads, in one-letter code: MKLQLLFLTLAQLAKHGLAIPLLQSSKTTTNSTLVASQEVNFTTYVYPDTNSTNIFPMPKCQNITLEDATIDQLQNYMENGILTSTDIVHCYLDRYLQVNPYVNGILQLNPDVLTIASELDDERANGIIRGPLHGIPFIVKDNFATKDKMDTTAGSYALLGSIVPRDAYVVKQLREAGAVLFGHATLSEWADMRSNDYSEGYSARGGQSRCPFNLTVNPGGSSSGSAISVASNMIAFALGTETDGSIIDPAMRNGVVGLKPTVGLTSRYGVIPESEHQDTTGPIARTVRDAVYVFQSMWGIDENDIYTLNQTGKTPEDGDYMKFLSNKTSLEGARFGLPWKRLWQNAKADEIDRLLEVVKQIEEAGAIVYNNTNFYNLDVISNDGWNWELGSVNESEYTVVKVDFYNNIKSYLSEVKNTEIHSLEDIVEYNNKYMGTEGGKPNIVPAFSSGQDGFLASLEWGGVKNETYWQAVEYVRRTSQDEGIDYALNYTDPKTNDSFILNGLLVPSGTSITYQQAAKAGYPMITLPIGVKTNGRPFGLGIMHSAWQEPQLIKYGSAIEDLLQYKAKPKFYEYVAKNVPVW.

A signal peptide spans 1-19 (MKLQLLFLTLAQLAKHGLA). Residues Lys141 and Ser222 each act as charge relay system in the active site. Catalysis depends on Ser246, which acts as the Acyl-ester intermediate.

This sequence belongs to the amidase family.

The protein resides in the cytoplasm. The enzyme catalyses a monocarboxylic acid amide + H2O = a monocarboxylate + NH4(+). The protein is Putative amidase C869.01 of Schizosaccharomyces pombe (strain 972 / ATCC 24843) (Fission yeast).